A 1178-amino-acid polypeptide reads, in one-letter code: Pesticidal crystal protein Cry1Ac (1178 aa).

Belongs to the delta endotoxin family.

Its function is as follows. Promotes colloidosmotic lysis by binding to the midgut epithelial cells of many lepidopteran larvae. In Bacillus thuringiensis subsp. kurstaki, this protein is Pesticidal crystal protein Cry1Ac (cry1Ac).